The primary structure comprises 397 residues: Mannonate dehydratase (397 aa).

Belongs to the mannonate dehydratase family. Fe(2+) serves as cofactor. The cofactor is Mn(2+).

It carries out the reaction D-mannonate = 2-dehydro-3-deoxy-D-gluconate + H2O. The protein operates within carbohydrate metabolism; pentose and glucuronate interconversion. Functionally, catalyzes the dehydration of D-mannonate. This chain is Mannonate dehydratase, found in Saccharophagus degradans (strain 2-40 / ATCC 43961 / DSM 17024).